Here is a 175-residue protein sequence, read N- to C-terminus: Methylated-DNA--protein-cysteine methyltransferase (175 aa).

DNA-binding residues include tyrosine 115 and arginine 127. Residue cysteine 144 is the Nucleophile; methyl group acceptor of the active site.

The protein belongs to the MGMT family.

Its subcellular location is the nucleus. The enzyme catalyses a 6-O-methyl-2'-deoxyguanosine in DNA + L-cysteinyl-[protein] = S-methyl-L-cysteinyl-[protein] + a 2'-deoxyguanosine in DNA. It catalyses the reaction a 4-O-methyl-thymidine in DNA + L-cysteinyl-[protein] = a thymidine in DNA + S-methyl-L-cysteinyl-[protein]. Its function is as follows. Involved in the cellular defense against the biological effects of O6-methylguanine (O6-MeG) and O4-methylthymine (O4-MeT) in DNA. Repairs the methylated nucleobase in DNA by stoichiometrically transferring the methyl group to a cysteine residue in the enzyme. This is a suicide reaction: the enzyme is irreversibly inactivated. The sequence is that of Methylated-DNA--protein-cysteine methyltransferase (MGT1) from Candida albicans (strain SC5314 / ATCC MYA-2876) (Yeast).